Here is a 329-residue protein sequence, read N- to C-terminus: T-cell acute lymphocytic leukemia protein 1 homolog (329 aa).

Disordered stretches follow at residues 1–28 (MTER…RMAP), 40–78 (ETSR…KGRD), and 91–125 (TELC…SPPA). The residue at position 12 (S12) is a Phosphoserine. The segment covering 58–70 (SGAGGGPASGGGA) has biased composition (gly residues). Over residues 96-106 (PPGPAPAPAPA) the composition is skewed to pro residues. S122 bears the Phosphoserine; by MAPK mark. Phosphoserine is present on S172. Positions 187-239 (VRRIFTNSRERWRQQNVNGAFAELRKLIPTHPPDKKLSKNEILRLAMKYINFL) constitute a bHLH domain. The disordered stretch occupies residues 247–329 (EEEGTQRAKP…LPAADGAGPR (83 aa)). Over residues 263–273 (GAGGGGAGGGI) the composition is skewed to gly residues. A compositionally biased stretch (low complexity) spans 317-329 (PALLPAADGAGPR).

Efficient DNA binding requires dimerization with another bHLH protein. Forms heterodimers with TCF3. Binds to the LIM domain containing protein LMO2 and to DRG1. Can assemble in a complex with LDB1 and LMO2. Component of a TAL-1 complex composed at least of CBFA2T3, LDB1, TAL1 and TCF3. Interacts with SBNO2; this interaction inhibits TAL1 occupancy of the DCSTAMP promoter, leading to the activation of the DCSTAMP promoter by the transcription factor MITF. In terms of processing, phosphorylated on serine residues. Phosphorylation of Ser-122 by MAPK is strongly stimulated by hypoxia. Ubiquitinated; subsequent to hypoxia-dependent phosphorylation of Ser-122, ubiquitination targets the protein for rapid degradation via the ubiquitin system. This process may be characteristic for microvascular endothelial cells, since it could not be observed in large vessel endothelial cells. In terms of tissue distribution, erythroid and myeloid cells.

The protein resides in the nucleus. In terms of biological role, implicated in the genesis of hemopoietic malignancies. It may play an important role in hemopoietic differentiation. Serves as a positive regulator of erythroid differentiation. The protein is T-cell acute lymphocytic leukemia protein 1 homolog (Tal1) of Mus musculus (Mouse).